A 354-amino-acid polypeptide reads, in one-letter code: Type II secretion system protein K (354 aa).

Residues 1-7 (MSRRQRG) constitute a propeptide, leader sequence. The helical transmembrane segment at 8 to 28 (VALLIVMLMLSLMVTIAASIT) threads the bilayer. The Periplasmic segment spans residues 29–354 (ERSGKAWQRT…QYGGYRTVNP (326 aa)). The interval 114–151 (NVTPNNASGNNTSGNNNAANGSSGNGNSPQPPKVGTSE) is disordered. Positions 118–141 (NNASGNNTSGNNNAANGSSGNGNS) are enriched in low complexity.

This sequence belongs to the GSP K family. In terms of assembly, type II secretion is composed of four main components: the outer membrane complex, the inner membrane complex, the cytoplasmic secretion ATPase and the periplasm-spanning pseudopilus. Interacts with core component OutG. Post-translationally, cleaved by prepilin peptidase.

It is found in the cell inner membrane. Its function is as follows. Component of the type II secretion system required for the energy-dependent secretion of extracellular factors such as proteases and toxins from the periplasm. Plays a role in pseudopilus assembly and seems to control its length. Interacts with the pseudopilus tip complex that is critical for the recognition and binding of secretion substrates. The sequence is that of Type II secretion system protein K (outK) from Dickeya chrysanthemi (Pectobacterium chrysanthemi).